Consider the following 75-residue polypeptide: Small ribosomal subunit protein bS18 (75 aa).

It belongs to the bacterial ribosomal protein bS18 family. In terms of assembly, part of the 30S ribosomal subunit. Forms a tight heterodimer with protein bS6.

Its function is as follows. Binds as a heterodimer with protein bS6 to the central domain of the 16S rRNA, where it helps stabilize the platform of the 30S subunit. The sequence is that of Small ribosomal subunit protein bS18 from Teredinibacter turnerae (strain ATCC 39867 / T7901).